The sequence spans 299 residues: Sulfate adenylyltransferase subunit 2 (299 aa).

The protein belongs to the PAPS reductase family. CysD subfamily. In terms of assembly, heterodimer composed of CysD, the smaller subunit, and CysN.

It catalyses the reaction sulfate + ATP + H(+) = adenosine 5'-phosphosulfate + diphosphate. It functions in the pathway sulfur metabolism; hydrogen sulfide biosynthesis; sulfite from sulfate: step 1/3. Functionally, with CysN forms the ATP sulfurylase (ATPS) that catalyzes the adenylation of sulfate producing adenosine 5'-phosphosulfate (APS) and diphosphate, the first enzymatic step in sulfur assimilation pathway. APS synthesis involves the formation of a high-energy phosphoric-sulfuric acid anhydride bond driven by GTP hydrolysis by CysN coupled to ATP hydrolysis by CysD. In Colwellia psychrerythraea (strain 34H / ATCC BAA-681) (Vibrio psychroerythus), this protein is Sulfate adenylyltransferase subunit 2.